The following is a 101-amino-acid chain: Multivesicular body sorting factor 12 (101 aa).

Position 1 is an N-acetylmethionine (methionine 1). Residue serine 94 is modified to Phosphoserine.

In terms of assembly, component of the ESCRT-I complex (endosomal sorting complex required for transport I) which consists of STP22, VPS28, SRN2 and MVB12 in a 1:1:1:1 stoichiometry. Interacts with STP22 and SRN2.

Its subcellular location is the cytoplasm. The protein localises to the endosome. It is found in the late endosome membrane. Its function is as follows. Component of the ESCRT-I complex, a regulator of vesicular trafficking process. Binds to ubiquitinated cargo proteins and is required for the sorting of endocytic ubiquitinated cargos into multivesicular bodies (MVBs). Appears to be involved in cargo sorting and release of the ESCRT-I complex from the MVBs. The chain is Multivesicular body sorting factor 12 (MVB12) from Saccharomyces cerevisiae (strain ATCC 204508 / S288c) (Baker's yeast).